The chain runs to 332 residues: Holliday junction branch migration complex subunit RuvB (332 aa).

Residues 1–181 are large ATPase domain (RuvB-L); the sequence is MSRILDNEIM…FGITGHMEYY (181 aa). Residues Leu20, Arg21, Gly62, Lys65, Thr66, Thr67, 128–130, Arg171, Tyr181, and Arg218 contribute to the ATP site; that span reads EDF. Thr66 is a Mg(2+) binding site. Positions 182–252 are small ATPAse domain (RuvB-S); that stretch reads AHAGLTEIVE…ITDKALTMLD (71 aa). Residues 255-332 are head domain (RuvB-H); that stretch reads HEGLDYVDQK…EHLGYEYSEK (78 aa). 4 residues coordinate DNA: Arg291, Arg310, Arg312, and Arg315.

This sequence belongs to the RuvB family. Homohexamer. Forms an RuvA(8)-RuvB(12)-Holliday junction (HJ) complex. HJ DNA is sandwiched between 2 RuvA tetramers; dsDNA enters through RuvA and exits via RuvB. An RuvB hexamer assembles on each DNA strand where it exits the tetramer. Each RuvB hexamer is contacted by two RuvA subunits (via domain III) on 2 adjacent RuvB subunits; this complex drives branch migration. In the full resolvosome a probable DNA-RuvA(4)-RuvB(12)-RuvC(2) complex forms which resolves the HJ.

It localises to the cytoplasm. The enzyme catalyses ATP + H2O = ADP + phosphate + H(+). Functionally, the RuvA-RuvB-RuvC complex processes Holliday junction (HJ) DNA during genetic recombination and DNA repair, while the RuvA-RuvB complex plays an important role in the rescue of blocked DNA replication forks via replication fork reversal (RFR). RuvA specifically binds to HJ cruciform DNA, conferring on it an open structure. The RuvB hexamer acts as an ATP-dependent pump, pulling dsDNA into and through the RuvAB complex. RuvB forms 2 homohexamers on either side of HJ DNA bound by 1 or 2 RuvA tetramers; 4 subunits per hexamer contact DNA at a time. Coordinated motions by a converter formed by DNA-disengaged RuvB subunits stimulates ATP hydrolysis and nucleotide exchange. Immobilization of the converter enables RuvB to convert the ATP-contained energy into a lever motion, pulling 2 nucleotides of DNA out of the RuvA tetramer per ATP hydrolyzed, thus driving DNA branch migration. The RuvB motors rotate together with the DNA substrate, which together with the progressing nucleotide cycle form the mechanistic basis for DNA recombination by continuous HJ branch migration. Branch migration allows RuvC to scan DNA until it finds its consensus sequence, where it cleaves and resolves cruciform DNA. This Streptococcus pneumoniae (strain JJA) protein is Holliday junction branch migration complex subunit RuvB.